The sequence spans 321 residues: Quinol oxidase subunit 2 (321 aa).

An N-terminal signal peptide occupies residues 1-25 (MIFLFRALKPLLVLALLTVVFVLGG). Residue C26 is the site of N-palmitoyl cysteine attachment. C26 carries the S-diacylglycerol cysteine lipid modification. The next 2 membrane-spanning stretches (helical) occupy residues 49–69 (SIGF…IILV) and 90–110 (TFLE…LSVP). The disordered stretch occupies residues 294–321 (QAVSPHSKTDPFENVKENEFKKSDDTEE). The segment covering 300–321 (SKTDPFENVKENEFKKSDDTEE) has biased composition (basic and acidic residues).

The protein belongs to the cytochrome c oxidase subunit 2 family.

It is found in the cell membrane. The catalysed reaction is 2 a quinol + O2 = 2 a quinone + 2 H2O. In terms of biological role, catalyzes quinol oxidation with the concomitant reduction of oxygen to water. Major component for energy conversion during vegetative growth. Subunit II transfers the electrons from a quinol to the binuclear center of the catalytic subunit I. This Bacillus spizizenii (strain ATCC 23059 / NRRL B-14472 / W23) (Bacillus subtilis subsp. spizizenii) protein is Quinol oxidase subunit 2 (qoxA).